The sequence spans 277 residues: 5-formyltetrahydrofolate cyclo-ligase, mitochondrial (277 aa).

The transit peptide at 1 to 48 directs the protein to the mitochondrion; sequence MIGARVFCITTTALRRSPIFFFPKIPTRPVFRLSPATRPIVAMSTTSK. 60-64 is an ATP binding site; that stretch reads KRVVR. Substrate contacts are provided by residues Glu113 and 207–211; that span reads RGGGY. ATP contacts are provided by residues 206–213 and Asp254; that span reads GRGGGYYD.

This sequence belongs to the 5-formyltetrahydrofolate cyclo-ligase family. As to quaternary structure, monomer.

The protein resides in the mitochondrion. The enzyme catalyses (6S)-5-formyl-5,6,7,8-tetrahydrofolate + ATP = (6R)-5,10-methenyltetrahydrofolate + ADP + phosphate. In terms of biological role, contributes to tetrahydrofolate metabolism and photorespiration through the regulation of serine hydroxymethyltransferase. Prefers the pentalutamyl to the monoglutamyl form of 5-formyltetrahydrofolate. The protein is 5-formyltetrahydrofolate cyclo-ligase, mitochondrial (5FCL) of Arabidopsis thaliana (Mouse-ear cress).